The primary structure comprises 300 residues: Ribosomal protein bS6--L-glutamate ligase (300 aa).

Residues 104 to 287 (LQLLARQGID…IAGRMIQWIE (184 aa)) form the ATP-grasp domain. ATP is bound by residues Lys-141, 178 to 179 (EY), Asp-187, and 211 to 213 (RSN). 3 residues coordinate Mg(2+): Asp-248, Glu-260, and Asn-262. Residues Asp-248, Glu-260, and Asn-262 each contribute to the Mn(2+) site.

The protein belongs to the RimK family. The cofactor is Mg(2+). Requires Mn(2+) as cofactor.

Its function is as follows. An L-glutamate ligase that catalyzes the ATP-dependent post-translational addition of glutamate residues to the C-terminus of ribosomal protein bS6 (RpsF). Is also able to catalyze the synthesis of poly-alpha-glutamate in vitro, via ATP hydrolysis from unprotected glutamate as substrate. The number of glutamate residues added to either RpsF or to poly-alpha-glutamate changes with pH. The sequence is that of Ribosomal protein bS6--L-glutamate ligase from Salmonella schwarzengrund (strain CVM19633).